A 219-amino-acid polypeptide reads, in one-letter code: Probable cutinase 4 (219 aa).

The first 17 residues, 1 to 17 (MILPSLLVASLSALAAA), serve as a signal peptide directing secretion. Cystine bridges form between cysteine 41-cysteine 120 and cysteine 67-cysteine 81. Asparagine 99 is a glycosylation site (N-linked (GlcNAc...) asparagine). The active-site Nucleophile is the serine 131. Residues cysteine 182 and cysteine 189 are joined by a disulfide bond. Aspartate 186 is an active-site residue. The Proton donor/acceptor role is filled by histidine 199.

This sequence belongs to the cutinase family.

The protein resides in the secreted. It catalyses the reaction cutin + H2O = cutin monomers.. Its function is as follows. Catalyzes the hydrolysis of complex carboxylic polyesters found in the cell wall of plants. Degrades cutin, a macromolecule that forms the structure of the plant cuticle. This chain is Probable cutinase 4, found in Aspergillus terreus (strain NIH 2624 / FGSC A1156).